A 213-amino-acid polypeptide reads, in one-letter code: Motile sperm domain-containing protein 1 (213 aa).

One can recognise an MSP domain in the interval 16–143 (PVFVFPTELI…KEHLTESLFF (128 aa)). Transmembrane regions (helical) follow at residues 159-179 (SLLT…PTLG) and 191-211 (LSVN…MAIL). Residues 205–208 (LITM) carry the Nuclear export signal motif.

It localises to the endoplasmic reticulum membrane. Its subcellular location is the golgi apparatus membrane. Plays a role in differentiation and/or proliferation of mesenchymal stem cells. Proposed to be involved in epithelial-to-mesenchymal transition (EMT). However, another study suggests that it is not required for EMT or stem cell self-renewal and acts during later stages of differentiation. The polypeptide is Motile sperm domain-containing protein 1 (MOSPD1) (Pongo abelii (Sumatran orangutan)).